Reading from the N-terminus, the 193-residue chain is Probable gluconokinase (193 aa).

ATP is bound at residue 21–28; sequence GPAGSGKT.

Belongs to the gluconokinase GntK/GntV family.

It carries out the reaction D-gluconate + ATP = 6-phospho-D-gluconate + ADP + H(+). Its pathway is carbohydrate acid metabolism; D-gluconate degradation. This Schizosaccharomyces pombe (strain 972 / ATCC 24843) (Fission yeast) protein is Probable gluconokinase.